A 141-amino-acid chain; its full sequence is Large ribosomal subunit protein uL16 (141 aa).

It belongs to the universal ribosomal protein uL16 family. In terms of assembly, part of the 50S ribosomal subunit. Contacts the CTC protein (RL25).

In terms of biological role, binds the 5S and 23S rRNAs and is also seen to make contacts with the A and P site tRNAs. Interacts with A site tRNA mimics, and is probably one of the key factors, along with a helix of the 23S rRNA, in positioning tRNA stems in the peptidyl-transferase center. This chain is Large ribosomal subunit protein uL16 (rplP), found in Deinococcus radiodurans (strain ATCC 13939 / DSM 20539 / JCM 16871 / CCUG 27074 / LMG 4051 / NBRC 15346 / NCIMB 9279 / VKM B-1422 / R1).